The sequence spans 352 residues: Holliday junction branch migration complex subunit RuvB (352 aa).

Positions 13–201 (FSLRKKELRL…FGISQKIEFY (189 aa)) are large ATPase domain (RuvB-L). ATP is bound by residues R41, G82, K85, T86, T87, 148–150 (EDF), R191, Y201, and R238. T86 is a binding site for Mg(2+). A small ATPAse domain (RuvB-S) region spans residues 202–273 (TYDELKQIIV…LIKKALNSYQ (72 aa)). The tract at residues 276–352 (EKGLDSLDRN…KYIDSKNENF (77 aa)) is head domain (RuvB-H). DNA contacts are provided by R330 and R335.

This sequence belongs to the RuvB family. As to quaternary structure, homohexamer. Forms an RuvA(8)-RuvB(12)-Holliday junction (HJ) complex. HJ DNA is sandwiched between 2 RuvA tetramers; dsDNA enters through RuvA and exits via RuvB. An RuvB hexamer assembles on each DNA strand where it exits the tetramer. Each RuvB hexamer is contacted by two RuvA subunits (via domain III) on 2 adjacent RuvB subunits; this complex drives branch migration. In the full resolvosome a probable DNA-RuvA(4)-RuvB(12)-RuvC(2) complex forms which resolves the HJ.

Its subcellular location is the cytoplasm. The enzyme catalyses ATP + H2O = ADP + phosphate + H(+). Its function is as follows. The RuvA-RuvB-RuvC complex processes Holliday junction (HJ) DNA during genetic recombination and DNA repair, while the RuvA-RuvB complex plays an important role in the rescue of blocked DNA replication forks via replication fork reversal (RFR). RuvA specifically binds to HJ cruciform DNA, conferring on it an open structure. The RuvB hexamer acts as an ATP-dependent pump, pulling dsDNA into and through the RuvAB complex. RuvB forms 2 homohexamers on either side of HJ DNA bound by 1 or 2 RuvA tetramers; 4 subunits per hexamer contact DNA at a time. Coordinated motions by a converter formed by DNA-disengaged RuvB subunits stimulates ATP hydrolysis and nucleotide exchange. Immobilization of the converter enables RuvB to convert the ATP-contained energy into a lever motion, pulling 2 nucleotides of DNA out of the RuvA tetramer per ATP hydrolyzed, thus driving DNA branch migration. The RuvB motors rotate together with the DNA substrate, which together with the progressing nucleotide cycle form the mechanistic basis for DNA recombination by continuous HJ branch migration. Branch migration allows RuvC to scan DNA until it finds its consensus sequence, where it cleaves and resolves cruciform DNA. This chain is Holliday junction branch migration complex subunit RuvB, found in Prochlorococcus marinus (strain MIT 9215).